A 178-amino-acid chain; its full sequence is ATP synthase subunit delta (178 aa).

It belongs to the ATPase delta chain family. F-type ATPases have 2 components, F(1) - the catalytic core - and F(0) - the membrane proton channel. F(1) has five subunits: alpha(3), beta(3), gamma(1), delta(1), epsilon(1). F(0) has three main subunits: a(1), b(2) and c(10-14). The alpha and beta chains form an alternating ring which encloses part of the gamma chain. F(1) is attached to F(0) by a central stalk formed by the gamma and epsilon chains, while a peripheral stalk is formed by the delta and b chains.

The protein resides in the cell inner membrane. F(1)F(0) ATP synthase produces ATP from ADP in the presence of a proton or sodium gradient. F-type ATPases consist of two structural domains, F(1) containing the extramembraneous catalytic core and F(0) containing the membrane proton channel, linked together by a central stalk and a peripheral stalk. During catalysis, ATP synthesis in the catalytic domain of F(1) is coupled via a rotary mechanism of the central stalk subunits to proton translocation. Functionally, this protein is part of the stalk that links CF(0) to CF(1). It either transmits conformational changes from CF(0) to CF(1) or is implicated in proton conduction. This is ATP synthase subunit delta from Polynucleobacter necessarius subsp. necessarius (strain STIR1).